The sequence spans 579 residues: Nuclear hormone receptor family member nhr-22 (579 aa).

Positions Ser93–Ala173 form a DNA-binding region, nuclear receptor. 2 NR C4-type zinc fingers span residues Cys96–Cys117 and Cys133–Cys161. Residues Leu233–Pro242 show a composition bias toward low complexity. The segment at Leu233 to Thr256 is disordered. The NR LBD domain maps to Glu304–Arg577.

The protein belongs to the nuclear hormone receptor family.

The protein localises to the nucleus. Orphan nuclear receptor. The protein is Nuclear hormone receptor family member nhr-22 (nhr-22) of Caenorhabditis elegans.